The sequence spans 76 residues: Kappa-actitoxin-Avd4e (76 aa).

A signal peptide spans 1 to 19 (MNKALFLCLVVLCAAVVFA). A propeptide spanning residues 20 to 31 (AEDLQKAKHAPF) is cleaved from the precursor. Cystine bridges form between C37–C72, C39–C65, and C55–C73. Positions 45 to 47 (RGD) match the Cell attachment site motif.

This sequence belongs to the sea anemone type 3 (BDS) potassium channel toxin family. In terms of tissue distribution, moderately expressed in the ectodermal tissue from the distal and proximal tentacles, body wall, and oral disk.

It is found in the secreted. It localises to the nematocyst. Functionally, is member of a fraction that shows antiangiogenic activity, since it inhibits human microvascular endothelial cells (HMEC) tubulogenesis. This protein could be a kunitz-type inhibitor with a RGD motif that could block angiogenesis in binding on integrins. Blocks Kv3 voltage-gated potassium channels. Reduces blood pressure. This chain is Kappa-actitoxin-Avd4e, found in Anemonia viridis (Snakelocks anemone).